A 71-amino-acid chain; its full sequence is DNA-directed RNA polymerases II, IV and V subunit 10 (71 aa).

Residues C7, C10, C44, and C45 each coordinate Zn(2+).

Belongs to the archaeal Rpo10/eukaryotic RPB10 RNA polymerase subunit family. Component of the RNA polymerase II, IV and V complexes. Interacts with NRPD1.

It is found in the nucleus. In terms of biological role, DNA-dependent RNA polymerase catalyzes the transcription of DNA into RNA using the four ribonucleoside triphosphates as substrates. Component of RNA polymerase II which synthesizes mRNA precursors and many functional non-coding RNAs. Pol II is the central component of the basal RNA polymerase II transcription machinery. It is composed of mobile elements that move relative to each other. Component of RNA polymerases IV and V which mediate short-interfering RNAs (siRNA) accumulation and subsequent RNA-directed DNA methylation-dependent (RdDM) transcriptional gene silencing (TGS) of endogenous repeated sequences, including transposable elements. This is DNA-directed RNA polymerases II, IV and V subunit 10 (NRPB10) from Arabidopsis thaliana (Mouse-ear cress).